The following is an 822-amino-acid chain: MKNKYDFKLVEEKRNEKWQKKGFFIAPKQTKKPFSIISPPPNVTGQLHLGHSWNAFIQDSLVRYHKLQGFDVLLLPSVDHAGIATQVKVEEDLAKKGIKKSDLKREEFIKKCYHWKEKQYLKIKEQWDKLGICYDFSKERFTLDQDAQIAVSDFFIKLWEKNLIYRGQKAINWDIKLQTAISNIEVINKPVEQKMYYLKYFLENSNEFLTVATTRIETISSDVALAINPKDKRYLHLVGKKVVHPLTKKLIIIIADSNVSSDFGSGIMKVSAHSILDFEIMEKHNLESKDCIDNYGNLNHEVPEFQGQNRFFARDLIAKKLEKEGFLAKIETVISNVGFSQRSDEIVEILKKPQWFVKMDELAKSLISHLNSKDKIKFYPKNFEKNLRKWFEKIHDWTISRQLWWGHRIPVWCKNDEFKVQIDSPGQGWIQDEDVLDTWFSSGISAFAFLGWPQNFDLIKSYFPTSLLVTGWDILFFWVARMYFSSLFIMKQKPFEKVLLHGLIRDEIGRKMSKSLGNGLDPMEIIEKYGSDTLRQALIFNSSPGKDIKFNIEKLNTAWNLNNKIWNIAKYIADLDTFFAKPDLIDLWMENKIYILKRQIVKNIKKYNFSVIGTEINNFIYGDFSSRYIELIKTRKNGFYARKLLRKVLIILHPFLPFLTDFLMEKIFKMEILEQKMPRIRQFKENQKVENILEIIDNLRTYREKFQISKKIILEYCIINDKFSNAEIDIINKLTFGKWLENKELVIKTKNFEIAIKVPEELKKEQKGRELKEIQFLKSEILRAEKILTNKGFLEKAPREKIDLERTKLEKLKEKLVFYEKK.

The short motif at 41–51 (PNVTGQLHLGH) is the 'HIGH' region element. The 'KMSKS' region signature appears at 511 to 515 (KMSKS). ATP is bound at residue Lys514. Positions 765 to 822 (EQKGRELKEIQFLKSEILRAEKILTNKGFLEKAPREKIDLERTKLEKLKEKLVFYEKK) form a coiled coil.

Belongs to the class-I aminoacyl-tRNA synthetase family. ValS type 1 subfamily. Monomer.

The protein resides in the cytoplasm. It carries out the reaction tRNA(Val) + L-valine + ATP = L-valyl-tRNA(Val) + AMP + diphosphate. Functionally, catalyzes the attachment of valine to tRNA(Val). As ValRS can inadvertently accommodate and process structurally similar amino acids such as threonine, to avoid such errors, it has a 'posttransfer' editing activity that hydrolyzes mischarged Thr-tRNA(Val) in a tRNA-dependent manner. This chain is Valine--tRNA ligase, found in Mesomycoplasma hyopneumoniae (strain J / ATCC 25934 / NCTC 10110) (Mycoplasma hyopneumoniae).